Here is an 807-residue protein sequence, read N- to C-terminus: Sucrose synthase 2 (807 aa).

A GT-B glycosyltransferase region spans residues 274 to 752 (MVFNVVILSP…GLKRIYERYT (479 aa)).

This sequence belongs to the glycosyltransferase 1 family. Plant sucrose synthase subfamily. Detected in the whole plant but at lower levels. Predominantly expressed in developing siliques. Also detected in the root tip. Detected in the embryo, endosperm and seed coat (at the protein level).

The protein resides in the cytoplasm. The protein localises to the plastid membrane. It catalyses the reaction an NDP-alpha-D-glucose + D-fructose = a ribonucleoside 5'-diphosphate + sucrose + H(+). Functionally, sucrose-cleaving enzyme that provides UDP-glucose and fructose for various metabolic pathways. Modulates metabolic homeostasis and directs carbon towards starch synthesis in developing seeds. This is Sucrose synthase 2 (SUS2) from Arabidopsis thaliana (Mouse-ear cress).